Reading from the N-terminus, the 62-residue chain is Photosystem II reaction center protein Z (62 aa).

The next 2 helical transmembrane spans lie at 8–28 (ALLLLVVMSFVLIVGVPVLYA) and 41–61 (LVGGLAWTALVVLVGVLNYFV).

This sequence belongs to the PsbZ family. As to quaternary structure, PSII is composed of 1 copy each of membrane proteins PsbA, PsbB, PsbC, PsbD, PsbE, PsbF, PsbH, PsbI, PsbJ, PsbK, PsbL, PsbM, PsbT, PsbX, PsbY, PsbZ, Psb30/Ycf12, peripheral proteins PsbO, CyanoQ (PsbQ), PsbU, PsbV and a large number of cofactors. It forms dimeric complexes.

The protein resides in the cellular thylakoid membrane. Its function is as follows. May control the interaction of photosystem II (PSII) cores with the light-harvesting antenna, regulates electron flow through the 2 photosystem reaction centers. PSII is a light-driven water plastoquinone oxidoreductase, using light energy to abstract electrons from H(2)O, generating a proton gradient subsequently used for ATP formation. The polypeptide is Photosystem II reaction center protein Z (Synechococcus elongatus (strain ATCC 33912 / PCC 7942 / FACHB-805) (Anacystis nidulans R2)).